The chain runs to 1719 residues: Cilia- and flagella-associated protein 43 (1719 aa).

The segment at 94–120 (VREEGAGGGADKPSGSGAVSGKQQSSG) is disordered. WD repeat units lie at residues 122–165 (SVVL…GRCR), 174–214 (SSTS…EKAV), 226–263 (PAGAEVTCHAWGPGGLYVGTSTGGLVLLDTATMAPLQL), 308–345 (TSGAAVTALTLNRDLVAVAGADGSVRVFVSVPAAAAAI), 413–452 (CHVGRLAGVVPHPGGGAFLTTGSDGSVRVWSTTDGALLGR), and 513–552 (LHSAPVDVLVFSPANDLLLSAGRDGIAWLCSVDARGGRVR). A disordered region spans residues 569–596 (TWPRSDGGSGAASGHAQAGPVSTTSAEG). 2 WD repeats span residues 697-736 (AHARASGGVAVAPGGHLLASGAADGTVALRNMSLITLAAQ) and 749-788 (ITAGGVVTVSFDATGRYLASAGADGALFVYELSKRAAVAN). The disordered stretch occupies residues 1022–1045 (RAKQEAARKADEDAAKRSAKDNAG). One copy of the WD 9 repeat lies at 1073 to 1114 (PKPAWLVALGVEPDAVNPKLITEEQNRELKEWQAKEKSLQEE). Disordered stretches follow at residues 1220–1269 (MPGG…AAAA), 1277–1296 (ATAAGGAGSSGGAAPCGAAG), and 1325–1372 (TLNP…AAAA). Residues 1221–1233 (PGGGAIGAAGGHQ) show a composition bias toward gly residues. Positions 1257-1269 (ASLAHSPSGAAAA) are enriched in low complexity. The segment covering 1344–1358 (SSALHPSHSHASVHG) has biased composition (low complexity). Coiled coils occupy residues 1524–1609 (AAQW…RSAQ) and 1651–1679 (HKKLKEIALAQQNELGELRQQLEKLRLRT). Residues 1685–1719 (ESGAVAGMPSPPRRLPPDIKLLAGSPSSSSVAGRT) form a disordered region. Residues 1709–1719 (SPSSSSVAGRT) show a composition bias toward polar residues.

The protein belongs to the CFAP43 family.

It is found in the cell projection. It localises to the cilium. Its subcellular location is the flagellum. The protein localises to the cytoplasm. The protein resides in the cytoskeleton. It is found in the flagellum axoneme. Flagellar protein involved in flagellum axoneme organization and function. The protein is Cilia- and flagella-associated protein 43 of Chlamydomonas reinhardtii (Chlamydomonas smithii).